Consider the following 301-residue polypeptide: Acetylglutamate kinase (301 aa).

Residues Gly-71–Gly-72, Arg-93, and Asn-198 each bind substrate.

This sequence belongs to the acetylglutamate kinase family. ArgB subfamily.

It localises to the cytoplasm. It catalyses the reaction N-acetyl-L-glutamate + ATP = N-acetyl-L-glutamyl 5-phosphate + ADP. Its pathway is amino-acid biosynthesis; L-arginine biosynthesis; N(2)-acetyl-L-ornithine from L-glutamate: step 2/4. In terms of biological role, catalyzes the ATP-dependent phosphorylation of N-acetyl-L-glutamate. This Zymomonas mobilis subsp. mobilis (strain ATCC 31821 / ZM4 / CP4) protein is Acetylglutamate kinase.